The sequence spans 63 residues: Large ribosomal subunit protein bL32 (63 aa).

Positions 1-18 (MAHPKAKVSKSRRDKRRA) are enriched in basic residues. Residues 1–25 (MAHPKAKVSKSRRDKRRAQFNARTK) form a disordered region.

This sequence belongs to the bacterial ribosomal protein bL32 family.

The polypeptide is Large ribosomal subunit protein bL32 (Chlorobium phaeovibrioides (strain DSM 265 / 1930) (Prosthecochloris vibrioformis (strain DSM 265))).